The primary structure comprises 232 residues: 7-cyano-7-deazaguanine synthase (232 aa).

An ATP-binding site is contributed by 7 to 17 (LSGGLDSTVVT). The Zn(2+) site is built by Cys-195, Cys-206, Cys-209, and Cys-212.

This sequence belongs to the QueC family. The cofactor is Zn(2+).

The enzyme catalyses 7-carboxy-7-deazaguanine + NH4(+) + ATP = 7-cyano-7-deazaguanine + ADP + phosphate + H2O + H(+). Its pathway is purine metabolism; 7-cyano-7-deazaguanine biosynthesis. Catalyzes the ATP-dependent conversion of 7-carboxy-7-deazaguanine (CDG) to 7-cyano-7-deazaguanine (preQ(0)). The protein is 7-cyano-7-deazaguanine synthase of Methanocaldococcus jannaschii (strain ATCC 43067 / DSM 2661 / JAL-1 / JCM 10045 / NBRC 100440) (Methanococcus jannaschii).